The chain runs to 262 residues: Malonyl-[acyl-carrier protein] O-methyltransferase (262 aa).

The protein belongs to the methyltransferase superfamily.

It carries out the reaction malonyl-[ACP] + S-adenosyl-L-methionine = malonyl-[ACP] methyl ester + S-adenosyl-L-homocysteine. It participates in cofactor biosynthesis; biotin biosynthesis. Its function is as follows. Converts the free carboxyl group of a malonyl-thioester to its methyl ester by transfer of a methyl group from S-adenosyl-L-methionine (SAM). It allows to synthesize pimeloyl-ACP via the fatty acid synthetic pathway. The polypeptide is Malonyl-[acyl-carrier protein] O-methyltransferase (Erwinia pyrifoliae (strain DSM 12163 / CIP 106111 / Ep16/96)).